The following is a 557-amino-acid chain: Aerobic glycerol-3-phosphate dehydrogenase (557 aa).

FAD is bound at residue 21–49 (DVVIIGGGITGAGIALDASERGMKVALVE).

This sequence belongs to the FAD-dependent glycerol-3-phosphate dehydrogenase family. FAD serves as cofactor.

Its subcellular location is the cytoplasm. The enzyme catalyses a quinone + sn-glycerol 3-phosphate = dihydroxyacetone phosphate + a quinol. It participates in polyol metabolism; glycerol degradation via glycerol kinase pathway; glycerone phosphate from sn-glycerol 3-phosphate (aerobic route): step 1/1. The polypeptide is Aerobic glycerol-3-phosphate dehydrogenase (glpD) (Staphylococcus saprophyticus subsp. saprophyticus (strain ATCC 15305 / DSM 20229 / NCIMB 8711 / NCTC 7292 / S-41)).